Reading from the N-terminus, the 262-residue chain is Glutamate racemase (262 aa).

Substrate-binding positions include Asp9–Ser10 and Tyr41–Gly42. The active-site Proton donor/acceptor is Cys73. Substrate is bound at residue Asn74–Thr75. Cys180 acts as the Proton donor/acceptor in catalysis. Thr181 to His182 is a substrate binding site.

This sequence belongs to the aspartate/glutamate racemases family.

It carries out the reaction L-glutamate = D-glutamate. It functions in the pathway cell wall biogenesis; peptidoglycan biosynthesis. In terms of biological role, provides the (R)-glutamate required for cell wall biosynthesis. The sequence is that of Glutamate racemase from Aliivibrio fischeri (strain ATCC 700601 / ES114) (Vibrio fischeri).